The following is a 447-amino-acid chain: Serine--tRNA ligase (447 aa).

An L-serine-binding site is contributed by 245 to 247 (TAE). Residues 276 to 278 (RKE) and valine 292 contribute to the ATP site. Residue glutamate 299 coordinates L-serine. Residue 363–366 (ELAS) participates in ATP binding. Residue threonine 398 participates in L-serine binding.

The protein belongs to the class-II aminoacyl-tRNA synthetase family. Type-1 seryl-tRNA synthetase subfamily. As to quaternary structure, homodimer. The tRNA molecule binds across the dimer.

It is found in the cytoplasm. It catalyses the reaction tRNA(Ser) + L-serine + ATP = L-seryl-tRNA(Ser) + AMP + diphosphate + H(+). It carries out the reaction tRNA(Sec) + L-serine + ATP = L-seryl-tRNA(Sec) + AMP + diphosphate + H(+). It participates in aminoacyl-tRNA biosynthesis; selenocysteinyl-tRNA(Sec) biosynthesis; L-seryl-tRNA(Sec) from L-serine and tRNA(Sec): step 1/1. Its function is as follows. Catalyzes the attachment of serine to tRNA(Ser). Is also able to aminoacylate tRNA(Sec) with serine, to form the misacylated tRNA L-seryl-tRNA(Sec), which will be further converted into selenocysteinyl-tRNA(Sec). This is Serine--tRNA ligase from Pyrobaculum neutrophilum (strain DSM 2338 / JCM 9278 / NBRC 100436 / V24Sta) (Thermoproteus neutrophilus).